A 339-amino-acid chain; its full sequence is UDP-N-acetylglucosamine--N-acetylmuramyl-(pentapeptide) pyrophosphoryl-undecaprenol N-acetylglucosamine transferase (339 aa).

UDP-N-acetyl-alpha-D-glucosamine-binding positions include 11 to 13 (TGG), asparagine 127, arginine 170, serine 188, isoleucine 235, and glutamine 280.

It belongs to the glycosyltransferase 28 family. MurG subfamily.

Its subcellular location is the cell inner membrane. The enzyme catalyses di-trans,octa-cis-undecaprenyl diphospho-N-acetyl-alpha-D-muramoyl-L-alanyl-D-glutamyl-meso-2,6-diaminopimeloyl-D-alanyl-D-alanine + UDP-N-acetyl-alpha-D-glucosamine = di-trans,octa-cis-undecaprenyl diphospho-[N-acetyl-alpha-D-glucosaminyl-(1-&gt;4)]-N-acetyl-alpha-D-muramoyl-L-alanyl-D-glutamyl-meso-2,6-diaminopimeloyl-D-alanyl-D-alanine + UDP + H(+). Its pathway is cell wall biogenesis; peptidoglycan biosynthesis. Cell wall formation. Catalyzes the transfer of a GlcNAc subunit on undecaprenyl-pyrophosphoryl-MurNAc-pentapeptide (lipid intermediate I) to form undecaprenyl-pyrophosphoryl-MurNAc-(pentapeptide)GlcNAc (lipid intermediate II). The protein is UDP-N-acetylglucosamine--N-acetylmuramyl-(pentapeptide) pyrophosphoryl-undecaprenol N-acetylglucosamine transferase of Thermotoga maritima (strain ATCC 43589 / DSM 3109 / JCM 10099 / NBRC 100826 / MSB8).